A 160-amino-acid polypeptide reads, in one-letter code: Transcriptional repressor NrdR (160 aa).

Residues 1–11 (MRCPSCSSLDT) are compositionally biased toward polar residues. The segment at 1 to 20 (MRCPSCSSLDTQVKDSRPTE) is disordered. Residues 3–34 (CPSCSSLDTQVKDSRPTEDSSVIRRRRVCLAC) fold into a zinc finger. One can recognise an ATP-cone domain in the interval 49-139 (LTVIKRNGRR…VYRNFREAKD (91 aa)).

Belongs to the NrdR family. Zn(2+) is required as a cofactor.

Functionally, negatively regulates transcription of bacterial ribonucleotide reductase nrd genes and operons by binding to NrdR-boxes. The sequence is that of Transcriptional repressor NrdR from Rhodopseudomonas palustris (strain BisA53).